A 388-amino-acid polypeptide reads, in one-letter code: Succinyl-diaminopimelate desuccinylase (388 aa).

A Zn(2+)-binding site is contributed by H71. D73 is an active-site residue. D104 serves as a coordination point for Zn(2+). The Proton acceptor role is filled by E143. Positions 144, 172, and 361 each coordinate Zn(2+).

It belongs to the peptidase M20A family. DapE subfamily. In terms of assembly, homodimer. Zn(2+) serves as cofactor. Requires Co(2+) as cofactor.

The catalysed reaction is N-succinyl-(2S,6S)-2,6-diaminopimelate + H2O = (2S,6S)-2,6-diaminopimelate + succinate. It functions in the pathway amino-acid biosynthesis; L-lysine biosynthesis via DAP pathway; LL-2,6-diaminopimelate from (S)-tetrahydrodipicolinate (succinylase route): step 3/3. Catalyzes the hydrolysis of N-succinyl-L,L-diaminopimelic acid (SDAP), forming succinate and LL-2,6-diaminopimelate (DAP), an intermediate involved in the bacterial biosynthesis of lysine and meso-diaminopimelic acid, an essential component of bacterial cell walls. The polypeptide is Succinyl-diaminopimelate desuccinylase (Bradyrhizobium diazoefficiens (strain JCM 10833 / BCRC 13528 / IAM 13628 / NBRC 14792 / USDA 110)).